The chain runs to 148 residues: Lysozyme-like protein 6 (148 aa).

Positions 1–19 (MLKALFICVASCLLVVNDG) are cleaved as a signal peptide. Residues 20 to 148 (NIIHRCSLAK…SYWMTGCHLG (129 aa)) enclose the C-type lysozyme domain. Cystine bridges form between cysteine 25/cysteine 145, cysteine 49/cysteine 133, cysteine 83/cysteine 98, and cysteine 94/cysteine 112. The active site involves glutamate 54. N-linked (GlcNAc...) asparagine glycosylation occurs at asparagine 58. Aspartate 71 is an active-site residue.

The protein belongs to the glycosyl hydrolase 22 family. As to quaternary structure, monomer. Expressed strongly in testis and epididymis and weakly in seminal vesicle, vas deferens, kidney and spleen. Highly expressed in primary spermatocytes and round spermatids (at protein level).

The protein localises to the secreted. Its subcellular location is the cell surface. It localises to the cell projection. The protein resides in the cilium. It is found in the flagellum. It carries out the reaction Hydrolysis of (1-&gt;4)-beta-linkages between N-acetylmuramic acid and N-acetyl-D-glucosamine residues in a peptidoglycan and between N-acetyl-D-glucosamine residues in chitodextrins.. In terms of biological role, may be involved sperm-egg plasma membrane adhesion and fusion during fertilization. Exhibits bacteriolytic activity in vitro against Micrococcus luteus and Staphylococcus aureus. Shows weak bacteriolytic activity against Gram-positive bacteria at physiological pH. Bacteriolytic activity is pH-dependent, with a maximum at around pH 5.6. The protein is Lysozyme-like protein 6 (Lyzl6) of Mus musculus (Mouse).